Consider the following 175-residue polypeptide: Crossover junction endodeoxyribonuclease RuvC (175 aa).

Catalysis depends on residues Asp-16, Glu-76, and Asp-148. Mg(2+)-binding residues include Asp-16, Glu-76, and Asp-148.

The protein belongs to the RuvC family. As to quaternary structure, homodimer which binds Holliday junction (HJ) DNA. The HJ becomes 2-fold symmetrical on binding to RuvC with unstacked arms; it has a different conformation from HJ DNA in complex with RuvA. In the full resolvosome a probable DNA-RuvA(4)-RuvB(12)-RuvC(2) complex forms which resolves the HJ. Requires Mg(2+) as cofactor.

Its subcellular location is the cytoplasm. It catalyses the reaction Endonucleolytic cleavage at a junction such as a reciprocal single-stranded crossover between two homologous DNA duplexes (Holliday junction).. Functionally, the RuvA-RuvB-RuvC complex processes Holliday junction (HJ) DNA during genetic recombination and DNA repair. Endonuclease that resolves HJ intermediates. Cleaves cruciform DNA by making single-stranded nicks across the HJ at symmetrical positions within the homologous arms, yielding a 5'-phosphate and a 3'-hydroxyl group; requires a central core of homology in the junction. The consensus cleavage sequence is 5'-(A/T)TT(C/G)-3'. Cleavage occurs on the 3'-side of the TT dinucleotide at the point of strand exchange. HJ branch migration catalyzed by RuvA-RuvB allows RuvC to scan DNA until it finds its consensus sequence, where it cleaves and resolves the cruciform DNA. The polypeptide is Crossover junction endodeoxyribonuclease RuvC (Bradyrhizobium diazoefficiens (strain JCM 10833 / BCRC 13528 / IAM 13628 / NBRC 14792 / USDA 110)).